Consider the following 450-residue polypeptide: MENSLSLDLTKTKPYVEEHEIQYLESIIREMDNTLGKKTGPGNKFLGWMDLPINYNKEEFARIKKAAEKIKNTCDVFIVIGIGGSYLGSRAAIEMISNTFYNNLEKNQRRVPQIYFAGNNISSTYMADLLELVKDKDICVNVISKSGTTTEPAIAFRIFKELLEKKYGKEGAKERIFATTDVAKGALRTLADLEGYETFVIPDDVGGRFSVLTPVGLLPIAVSGIDVDEMMKGAADARQEYSSDNIEKNHVYRYVAVRNALYRKGKTTEMLVNFEPCLHYFGEWWKQLYGESEGKDGKGIFPAAADFSTDLHSMGQYIQEGLRNIFETFINVENPRKSIIIKEDKENLDGLNFLAEKDMDYVNHQALRGTVLAHNDGGVPAIVLNVPELSAYYFGQLVYFFEKACGISGYLQGVNPFDQPGVEAYKKNMFALLGKPGYEDMKATLEERLK.

Glutamate 291 serves as the catalytic Proton donor. Residues histidine 312 and lysine 426 contribute to the active site.

Belongs to the GPI family.

The protein resides in the cytoplasm. It catalyses the reaction alpha-D-glucose 6-phosphate = beta-D-fructose 6-phosphate. Its pathway is carbohydrate biosynthesis; gluconeogenesis. It participates in carbohydrate degradation; glycolysis; D-glyceraldehyde 3-phosphate and glycerone phosphate from D-glucose: step 2/4. Functionally, catalyzes the reversible isomerization of glucose-6-phosphate to fructose-6-phosphate. The chain is Glucose-6-phosphate isomerase from Clostridium botulinum (strain Langeland / NCTC 10281 / Type F).